We begin with the raw amino-acid sequence, 137 residues long: Transcription antitermination protein NusB (137 aa).

Belongs to the NusB family.

Its function is as follows. Involved in transcription antitermination. Required for transcription of ribosomal RNA (rRNA) genes. Binds specifically to the boxA antiterminator sequence of the ribosomal RNA (rrn) operons. This is Transcription antitermination protein NusB from Finegoldia magna (strain ATCC 29328 / DSM 20472 / WAL 2508) (Peptostreptococcus magnus).